A 708-amino-acid polypeptide reads, in one-letter code: Metal-pseudopaline receptor CntO (708 aa).

The signal sequence occupies residues 1–21 (MRVSVSLVLGVGLGCSSPALW). In terms of domain architecture, TBDR plug spans 63–169 (RIEDIPQAIS…PGGTVNLVTK (107 aa)). The 535-residue stretch at 174 to 708 (ERFARLHASA…NLTMSLTLNY (535 aa)) folds into the TBDR beta-barrel domain.

Belongs to the TonB-dependent receptor family.

The protein localises to the cell outer membrane. In terms of biological role, transports the metallophore pseudopaline, which is involved in the acquisition of nickel and zinc, and thus enables bacterial growth inside the host, where metal access is limited. Is probably involved in the import of pseudopaline-metal complexes. The protein is Metal-pseudopaline receptor CntO of Pseudomonas aeruginosa (strain ATCC 15692 / DSM 22644 / CIP 104116 / JCM 14847 / LMG 12228 / 1C / PRS 101 / PAO1).